We begin with the raw amino-acid sequence, 774 residues long: Probable ubiquitin-like-specific protease 2A (774 aa).

A disordered region spans residues 118-141 (SSLSENDEVSTGEATNPASDPHEV). Catalysis depends on residues His-400, Asp-430, and Cys-485. The tract at residues 548-568 (ILPANSKSEPPHCGVSNRNDQ) is disordered.

It belongs to the peptidase C48 family.

Its function is as follows. Protease that catalyzes two essential functions in the SUMO pathway: processing of full-length SUMOs to their mature forms and deconjugation of SUMO from targeted proteins. In Arabidopsis thaliana (Mouse-ear cress), this protein is Probable ubiquitin-like-specific protease 2A (ULP2A).